Consider the following 481-residue polypeptide: F-box protein At1g49360 (481 aa).

In terms of domain architecture, F-box spans 105-156 (LKEDLFLPSDLVRLILSRLSFKDNIRSSTVCKAWGDIAASVRVKSRRCWLLY).

In Arabidopsis thaliana (Mouse-ear cress), this protein is F-box protein At1g49360.